Consider the following 954-residue polypeptide: Chromosomal passenger complex protein BIR1 (954 aa).

2 BIR repeats span residues 20 to 117 (RLRT…LLIY) and 153 to 241 (RKFT…YFFQ). Positions 208, 211, 228, and 237 each coordinate Zn(2+). Residues 375 to 419 (NVQLTQSSSPIKKKRKFKRISPRKIFDEEDSEHSLNNNSANGDNK) are disordered. Residues 385 to 396 (IKKKRKFKRISP) are compositionally biased toward basic residues. A phosphoserine mark is found at Ser-477, Ser-508, and Ser-552. Disordered regions lie at residues 541 to 645 (DIDR…SGKV) and 661 to 685 (FSAS…ISTP). Residues 556-583 (PKTHELIRDNSEKREAQNGEFRHQKDST) are compositionally biased toward basic and acidic residues. A Phosphoserine modification is found at Ser-587. The span at 593–604 (SNKSGDNSSNIT) shows a compositional bias: polar residues. 2 positions are modified to phosphoserine: Ser-751 and Ser-765. Residues 798–839 (LVSGTSSYPRNSRLEEQRKETSTSLADNSKKGSSFNEGNNEK) form a disordered region. Basic and acidic residues predominate over residues 809 to 818 (SRLEEQRKET). Positions 819 to 835 (STSLADNSKKGSSFNEG) are enriched in polar residues.

As to quaternary structure, component of the CPC complex at least composed of IPL1, BIR1 and SLI15. Interacts with CBF2/NDC10. Interacts with CBF3D/SKP1.

Its function is as follows. Component of the chromosomal passenger complex (CPC), a complex that acts as a key regulator of chromosome segregation and cytokinesis. In Saccharomyces cerevisiae (strain ATCC 204508 / S288c) (Baker's yeast), this protein is Chromosomal passenger complex protein BIR1 (BIR1).